The primary structure comprises 730 residues: Catalase-peroxidase (730 aa).

A disordered region spans residues 1 to 25 (MEEKKCPVTGHTQHTPTGGGTKNKD). The tryptophyl-tyrosyl-methioninium (Trp-Tyr) (with M-244) cross-link spans 95-218 (WHSAGTYRLN…LAAVQMGLIY (124 aa)). The Proton acceptor role is filled by His-96. Positions 218–244 (YVNPEGPNGQPSVLASGRDVRDTFKRM) form a cross-link, tryptophyl-tyrosyl-methioninium (Tyr-Met) (with W-95). His-259 lines the heme b pocket.

The protein belongs to the peroxidase family. Peroxidase/catalase subfamily. As to quaternary structure, homodimer or homotetramer. Heme b serves as cofactor. Post-translationally, formation of the three residue Trp-Tyr-Met cross-link is important for the catalase, but not the peroxidase activity of the enzyme.

The enzyme catalyses H2O2 + AH2 = A + 2 H2O. The catalysed reaction is 2 H2O2 = O2 + 2 H2O. Its function is as follows. Bifunctional enzyme with both catalase and broad-spectrum peroxidase activity. The sequence is that of Catalase-peroxidase from Desulfitobacterium hafniense (strain Y51).